The following is a 216-amino-acid chain: Somatotropin (216 aa).

An N-terminal signal peptide occupies residues 1–26; it reads MAAGPRNSMLLVFALLSLPWPQEVGA. A Zn(2+)-binding site is contributed by His45. Cys78 and Cys189 are joined by a disulfide. Ser131 is modified (phosphoserine). Glu198 is a Zn(2+) binding site. The cysteines at positions 206 and 214 are disulfide-linked.

Belongs to the somatotropin/prolactin family.

The protein resides in the secreted. Plays an important role in growth control. Its major role in stimulating body growth is to stimulate the liver and other tissues to secrete IGF1. It stimulates both the differentiation and proliferation of myoblasts. It also stimulates amino acid uptake and protein synthesis in muscle and other tissues. The polypeptide is Somatotropin (GH1) (Neovison vison (American mink)).